Here is a 611-residue protein sequence, read N- to C-terminus: Aspartate--tRNA(Asp/Asn) ligase (611 aa).

E177 is an L-aspartate binding site. The interval 201–204 is aspartate; it reads QLFK. L-aspartate is bound at residue R223. ATP is bound by residues 223-225 and Q232; that span reads RDE. L-aspartate is bound at residue H461. Residue E499 participates in ATP binding. R506 lines the L-aspartate pocket. 551 to 554 serves as a coordination point for ATP; that stretch reads GVDR.

The protein belongs to the class-II aminoacyl-tRNA synthetase family. Type 1 subfamily. As to quaternary structure, homodimer.

The protein localises to the cytoplasm. It catalyses the reaction tRNA(Asx) + L-aspartate + ATP = L-aspartyl-tRNA(Asx) + AMP + diphosphate. Functionally, aspartyl-tRNA synthetase with relaxed tRNA specificity since it is able to aspartylate not only its cognate tRNA(Asp) but also tRNA(Asn). Reaction proceeds in two steps: L-aspartate is first activated by ATP to form Asp-AMP and then transferred to the acceptor end of tRNA(Asp/Asn). In Synechococcus sp. (strain WH7803), this protein is Aspartate--tRNA(Asp/Asn) ligase.